We begin with the raw amino-acid sequence, 209 residues long: Thymidylate kinase (209 aa).

10–17 provides a ligand contact to ATP; that stretch reads GIDGCGKS.

Belongs to the thymidylate kinase family.

The catalysed reaction is dTMP + ATP = dTDP + ADP. Functionally, phosphorylation of dTMP to form dTDP in both de novo and salvage pathways of dTTP synthesis. This chain is Thymidylate kinase, found in Synechococcus sp. (strain CC9902).